Reading from the N-terminus, the 1053-residue chain is Putative ABC transporter C family member 15 (1053 aa).

The ABC transmembrane type-1 1 domain maps to 1-180; it reads MSVDVQRITD…LPDLLSALVQ (180 aa). Helical transmembrane passes span 11–31, 36–56, 125–145, and 151–171; these read FIWY…AIYI, LGLG…CNYP, FILW…CMLM, and AGAV…IFGL. Residues 214 to 437 enclose the ABC transporter 1 domain; the sequence is VEIENGAFSW…NIGFEVLTQC (224 aa). 249 to 256 contributes to the ATP binding site; that stretch reads GAVGSGKS. Transmembrane regions (helical) follow at residues 481–503, 523–543, 595–615, 714–734, and 738–758; these read LLVP…SNYW, ILLV…ARTI, MAVK…TIFV, LSHF…EGVI, and IAGL…TVIW. Residues 483–765 form the ABC transmembrane type-1 2 domain; sequence VPFIILAQSC…VIWNICNAEN (283 aa). In terms of domain architecture, ABC transporter 2 spans 804-1036; the sequence is FRDLQVRYAE…EDSFFSKLIK (233 aa). An ATP-binding site is contributed by 836–843; the sequence is GRTGSGKS.

The protein belongs to the ABC transporter superfamily. ABCC family. Conjugate transporter (TC 3.A.1.208) subfamily.

The protein localises to the membrane. The enzyme catalyses ATP + H2O + xenobioticSide 1 = ADP + phosphate + xenobioticSide 2.. Its function is as follows. Pump for glutathione S-conjugates. This Arabidopsis thaliana (Mouse-ear cress) protein is Putative ABC transporter C family member 15 (ABCC15).